The primary structure comprises 132 residues: MSTHDPISDLITRIRNAQMRSKSKVSTPGSKMRANVLDVLKAEGYIRGYATVEHPSGRSELEIELKYFDGEPVIREIERVSRPGRRVYASVKNLPRVNNGLGISVLSTPKGIMADHDARDANVGGEVLFTVF.

Part of the 30S ribosomal subunit. Contacts proteins S5 and S12. In terms of processing, a modified and unmodified form exist; the nature of the modification(s) is unknown.

One of the primary rRNA binding proteins, it binds directly to 16S rRNA central domain where it helps coordinate assembly of the platform of the 30S subunit. The polypeptide is Small ribosomal subunit protein uS8 (Rhodopseudomonas palustris (strain ATCC BAA-98 / CGA009)).